Here is a 157-residue protein sequence, read N- to C-terminus: Cyclic pyranopterin monophosphate synthase (157 aa).

Substrate contacts are provided by residues 74-76 and 112-113; these read MCH and ME. Residue aspartate 127 is part of the active site.

The protein belongs to the MoaC family. As to quaternary structure, homohexamer; trimer of dimers.

It carries out the reaction (8S)-3',8-cyclo-7,8-dihydroguanosine 5'-triphosphate = cyclic pyranopterin phosphate + diphosphate. It functions in the pathway cofactor biosynthesis; molybdopterin biosynthesis. Catalyzes the conversion of (8S)-3',8-cyclo-7,8-dihydroguanosine 5'-triphosphate to cyclic pyranopterin monophosphate (cPMP). This is Cyclic pyranopterin monophosphate synthase from Campylobacter jejuni subsp. jejuni serotype O:2 (strain ATCC 700819 / NCTC 11168).